Consider the following 202-residue polypeptide: Protein Mbar_A1807 (202 aa).

An AMMECR1 domain is found at 5–196 (VEGRAAVKLA…EKEPCGEVLE (192 aa)).

The polypeptide is Protein Mbar_A1807 (Methanosarcina barkeri (strain Fusaro / DSM 804)).